We begin with the raw amino-acid sequence, 180 residues long: LDLR chaperone boca (180 aa).

An N-terminal signal peptide occupies residues Met-1 to Ala-18. The span at Gln-48–Leu-61 shows a compositional bias: acidic residues. The disordered stretch occupies residues Gln-48–Ser-78. Residues Thr-93–Glu-166 form a structured core region. Residues Lys-177–Leu-180 carry the Prevents secretion from ER motif.

It belongs to the MESD family. As to quaternary structure, monomer. Interacts with Arrow and Yolkless.

It localises to the endoplasmic reticulum. Its function is as follows. Chaperone specifically assisting the folding of beta-propeller/EGF modules within the family of low-density lipoprotein receptors (LDLRs). Acts as a modulator of the Wg pathway, since some LDLRs are coreceptors for the canonical Wnt pathway. This is LDLR chaperone boca (boca) from Drosophila melanogaster (Fruit fly).